The primary structure comprises 156 residues: 6,7-dimethyl-8-ribityllumazine synthase (156 aa).

5-amino-6-(D-ribitylamino)uracil contacts are provided by residues Phe23, 57-59 (AYE), and 81-83 (AII). 86–87 (GT) serves as a coordination point for (2S)-2-hydroxy-3-oxobutyl phosphate. The active-site Proton donor is the His89. Phe114 contacts 5-amino-6-(D-ribitylamino)uracil. Arg128 is a (2S)-2-hydroxy-3-oxobutyl phosphate binding site.

This sequence belongs to the DMRL synthase family.

It carries out the reaction (2S)-2-hydroxy-3-oxobutyl phosphate + 5-amino-6-(D-ribitylamino)uracil = 6,7-dimethyl-8-(1-D-ribityl)lumazine + phosphate + 2 H2O + H(+). It functions in the pathway cofactor biosynthesis; riboflavin biosynthesis; riboflavin from 2-hydroxy-3-oxobutyl phosphate and 5-amino-6-(D-ribitylamino)uracil: step 1/2. Its function is as follows. Catalyzes the formation of 6,7-dimethyl-8-ribityllumazine by condensation of 5-amino-6-(D-ribitylamino)uracil with 3,4-dihydroxy-2-butanone 4-phosphate. This is the penultimate step in the biosynthesis of riboflavin. This chain is 6,7-dimethyl-8-ribityllumazine synthase, found in Helicobacter pylori (strain G27).